An 869-amino-acid chain; its full sequence is Sodium-dependent phosphate transporter (869 aa).

Topologically, residues 1–18 (MEAVAELSAPSLAGAPGE) are extracellular. The chain crosses the membrane as a helical span at residues 19-39 (YTWIVAVAGVTCFLTAFAIGA). Topologically, residues 40-54 (NDVANTFSSSVGSRA) are cytoplasmic. A helical membrane pass occupies residues 55-75 (IPLWAAIGMSAVLETVGATLL). The Extracellular portion of the chain corresponds to 76-97 (GGAVTDSIRSKIIDFEVFRETP). The helical transmembrane segment at 98 to 118 (SILMTGMLCALVGAGLWLFLA) threads the bilayer. Topologically, residues 119 to 120 (NH) are cytoplasmic. A helical membrane pass occupies residues 121–141 (LGLPVSTTHSIIGALLGFGLA). The Extracellular portion of the chain corresponds to 142–154 (SGNVRAVKWTQVA). A helical transmembrane segment spans residues 155-175 (FIVGSWVAAPLAASAAGATIF). Residues 176-196 (VCMRRLILRSRQPLRRAKRFL) lie on the Cytoplasmic side of the membrane. The helical transmembrane segment at 197-217 (WIFIYLITLTFSVFLVFKNFF) threads the bilayer. At 218 to 250 (ELNVSCDQMVAGGRVEHFEPCRISRWADAHSGT) the chain is on the extracellular side. A helical membrane pass occupies residues 251-271 (ALGIAVALSVALTFVISCLVY). Residues 272-720 (RFAFYRVESY…SGSADSEIGS (449 aa)) lie on the Cytoplasmic side of the membrane. Disordered regions lie at residues 286–312 (KRSSRTEPRDASEEGTGPSHARPGGLL), 374–401 (AAAAKPDVGTAAQSPESRFAADPVGSSV), and 453–571 (SAFL…KRER). Low complexity predominate over residues 457–481 (SSPSSSVPPSSPSPSSTPSSPSASP). The span at 482 to 491 (RRPPSRPPVP) shows a compositional bias: pro residues. Over residues 492–509 (RTCSPAPVSPSVPRAFAS) the composition is skewed to low complexity. The segment covering 556–571 (PHPERRDEVPAAKRER) has biased composition (basic and acidic residues). A helical membrane pass occupies residues 721 to 741 (PWYILLFGGLSMSLGLALLGY). Residues 742–759 (RVIKTVGVKLVKITPARG) lie on the Extracellular side of the membrane. A helical transmembrane segment spans residues 760–780 (FSMELGAAWTVLIFSAIGIPL). At 781–837 (STTHCAVGSTVGVGLMEPKHPRRETGDGPVAEGEEPKKRAVQCPVINTASVNWKLFG) the chain is on the cytoplasmic side. A helical transmembrane segment spans residues 838 to 858 (GVFVSWIITIAFSALVTAALF). The Extracellular portion of the chain corresponds to 859–869 (SFAAYSPRMVS).

It belongs to the inorganic phosphate transporter (PiT) (TC 2.A.20) family.

The protein localises to the cell membrane. It localises to the vacuole membrane. The protein resides in the cytoplasmic vesicle membrane. The enzyme catalyses 2 Na(+)(out) + phosphate(out) = 2 Na(+)(in) + phosphate(in). In terms of biological role, sodium-phosphate symporter which preferentially transports the monovalent form of phosphate with a stoichiometry of two sodium ions per phosphate ion. Plays a role in stabilizing the cytosolic pH and osmoregulation. May be required for optimal virulence of parasites in vivo. This Toxoplasma gondii (strain ATCC 50861 / VEG) protein is Sodium-dependent phosphate transporter.